Reading from the N-terminus, the 289-residue chain is Transcription factor MafA (289 aa).

Residues 52 to 73 (STPISTPCSSVPSSPSFCAPSP) are compositionally biased toward low complexity. Disordered regions lie at residues 52-87 (STPI…PNAA) and 126-164 (HHHH…HHHH). The segment covering 74–87 (GAQSGVNPSNPNAA) has biased composition (polar residues). The segment covering 152–164 (GHHHQVHHHHHHH) has biased composition (basic residues). The interval 201-226 (RLKQKRRTLKNRGYAQSCRYKRVQQR) is basic motif. Residues 201–264 (RLKQKRRTLK…DLYKDKYEKL (64 aa)) form the bZIP domain. Positions 229-250 (LETEKCQLQSQVEQLKQEVSRL) are leucine-zipper. The disordered stretch occupies residues 266-289 (SRSFTTRESPPQGNPGKANADFFM). The span at 267–276 (RSFTTRESPP) shows a compositional bias: polar residues.

It belongs to the bZIP family. Maf subfamily.

It is found in the nucleus. Its function is as follows. Transcription factor, possibly involved in transcription regulation during lens development. This Xenopus tropicalis (Western clawed frog) protein is Transcription factor MafA (mafa).